The primary structure comprises 399 residues: Tryptophan synthase beta chain (399 aa).

An N6-(pyridoxal phosphate)lysine modification is found at lysine 92.

It belongs to the TrpB family. Tetramer of two alpha and two beta chains. It depends on pyridoxal 5'-phosphate as a cofactor.

It carries out the reaction (1S,2R)-1-C-(indol-3-yl)glycerol 3-phosphate + L-serine = D-glyceraldehyde 3-phosphate + L-tryptophan + H2O. It participates in amino-acid biosynthesis; L-tryptophan biosynthesis; L-tryptophan from chorismate: step 5/5. The beta subunit is responsible for the synthesis of L-tryptophan from indole and L-serine. This is Tryptophan synthase beta chain from Bordetella bronchiseptica (strain ATCC BAA-588 / NCTC 13252 / RB50) (Alcaligenes bronchisepticus).